Consider the following 974-residue polypeptide: Protein bicaudal C homolog 1 (974 aa).

The segment at 1–50 is disordered; sequence MAAQGEPGYLAAQSDPGSNSERSTDSPVPGSEDDLVAGATLHSPEWSEER. Residues Ser26, Ser31, and Ser43 each carry the phosphoserine modification. KH domains are found at residues 132–199 and 284–348; these read RVTL…RVRI and PVST…RQYL. Residue Lys398 is modified to N6-acetyllysine. 3 positions are modified to phosphoserine: Ser576, Ser612, and Ser679. Disordered stretches follow at residues 593 to 644, 665 to 719, and 783 to 846; these read VLSA…GDLK, GTKN…HLAP, and YKPT…KSTE. A compositionally biased stretch (polar residues) spans 602 to 619; that stretch reads SIQTSGSEQTSPKSSPTE. Over residues 690-703 the composition is skewed to basic and acidic residues; that stretch reads LADKKAPGSERAAE. In terms of domain architecture, SAM spans 873 to 936; the sequence is FKGSDLPELF…LLAISELNKN (64 aa).

This sequence belongs to the BicC family. As to quaternary structure, interacts (via KH domains) with ANKS6 (via SAM domain) in an RNA-dependent manner. Interacts with ANKS3.

It localises to the cytoplasm. In terms of biological role, putative RNA-binding protein. Acts as a negative regulator of Wnt signaling. May be involved in regulating gene expression during embryonic development. The protein is Protein bicaudal C homolog 1 (BICC1) of Homo sapiens (Human).